The sequence spans 460 residues: UDP-N-acetylmuramate--L-alanine ligase (460 aa).

119 to 125 (GSHGKTT) is a binding site for ATP.

The protein belongs to the MurCDEF family.

The protein localises to the cytoplasm. It carries out the reaction UDP-N-acetyl-alpha-D-muramate + L-alanine + ATP = UDP-N-acetyl-alpha-D-muramoyl-L-alanine + ADP + phosphate + H(+). Its pathway is cell wall biogenesis; peptidoglycan biosynthesis. Functionally, cell wall formation. The protein is UDP-N-acetylmuramate--L-alanine ligase of Alkaliphilus metalliredigens (strain QYMF).